The sequence spans 225 residues: GTP cyclohydrolase III (225 aa).

The protein belongs to the archaeal-type GTP cyclohydrolase family.

It catalyses the reaction GTP + 3 H2O = 2-amino-5-formylamino-6-(5-phospho-D-ribosylamino)pyrimidin-4(3H)-one + 2 phosphate + 2 H(+). Its function is as follows. Catalyzes the formation of 2-amino-5-formylamino-6-ribofuranosylamino-4(3H)-pyrimidinone ribonucleotide monophosphate and inorganic phosphate from GTP. Also has an independent pyrophosphate phosphohydrolase activity. This is GTP cyclohydrolase III from Sulfurisphaera tokodaii (strain DSM 16993 / JCM 10545 / NBRC 100140 / 7) (Sulfolobus tokodaii).